The following is a 142-amino-acid chain: MKGLVRLLTVFSLLLGCWGWLGTTQIAQAGSLQSFLVPQVPVLAIESQNRADAKLATEFGKKIDLNNTNVRAFQQYPGLYPTLARKIIQNAPYSKVEDVLDLPGLSDGQKQLLQSNFDKFTVTELEPAFNEGDDRFNNGIYR.

Positions 1 to 29 are cleaved as a signal peptide; that stretch reads MKGLVRLLTVFSLLLGCWGWLGTTQIAQA.

Belongs to the PsbU family. As to quaternary structure, PSII is composed of 1 copy each of membrane proteins PsbA, PsbB, PsbC, PsbD, PsbE, PsbF, PsbH, PsbI, PsbJ, PsbK, PsbL, PsbM, PsbT, PsbX, PsbY, PsbZ, Psb30/Ycf12, peripheral proteins PsbO, CyanoQ (PsbQ), PsbU, PsbV and a large number of cofactors. It forms dimeric complexes.

The protein localises to the cellular thylakoid membrane. Functionally, one of the extrinsic, lumenal subunits of photosystem II (PSII). PSII is a light-driven water plastoquinone oxidoreductase, using light energy to abstract electrons from H(2)O, generating a proton gradient subsequently used for ATP formation. The extrinsic proteins stabilize the structure of photosystem II oxygen-evolving complex (OEC), the ion environment of oxygen evolution and protect the OEC against heat-induced inactivation. The polypeptide is Photosystem II extrinsic protein U (Trichormus variabilis (strain ATCC 29413 / PCC 7937) (Anabaena variabilis)).